The following is a 271-amino-acid chain: 4-hydroxy-tetrahydrodipicolinate reductase (271 aa).

Residues 11 to 16 (GGSGRM) and Glu37 contribute to the NAD(+) site. Arg38 is a binding site for NADP(+). Residues 101-103 (GTT) and 125-128 (APNM) each bind NAD(+). The active-site Proton donor/acceptor is His158. Position 159 (His159) interacts with (S)-2,3,4,5-tetrahydrodipicolinate. The active-site Proton donor is the Lys162. Residue 168 to 169 (GT) coordinates (S)-2,3,4,5-tetrahydrodipicolinate.

This sequence belongs to the DapB family.

The protein resides in the cytoplasm. It carries out the reaction (S)-2,3,4,5-tetrahydrodipicolinate + NAD(+) + H2O = (2S,4S)-4-hydroxy-2,3,4,5-tetrahydrodipicolinate + NADH + H(+). The enzyme catalyses (S)-2,3,4,5-tetrahydrodipicolinate + NADP(+) + H2O = (2S,4S)-4-hydroxy-2,3,4,5-tetrahydrodipicolinate + NADPH + H(+). It functions in the pathway amino-acid biosynthesis; L-lysine biosynthesis via DAP pathway; (S)-tetrahydrodipicolinate from L-aspartate: step 4/4. Its function is as follows. Catalyzes the conversion of 4-hydroxy-tetrahydrodipicolinate (HTPA) to tetrahydrodipicolinate. The chain is 4-hydroxy-tetrahydrodipicolinate reductase from Shewanella loihica (strain ATCC BAA-1088 / PV-4).